The following is a 332-amino-acid chain: 2,3-diketo-L-gulonate reductase (332 aa).

His44 (proton donor) is an active-site residue. Residues 168–174, 224–225, and 304–306 each bind NAD(+); these read ITMVDMS, WK, and GHE.

It belongs to the LDH2/MDH2 oxidoreductase family. DlgD subfamily. In terms of assembly, homodimer.

The protein localises to the cytoplasm. The enzyme catalyses 3-dehydro-L-gulonate + NAD(+) = 2,3-dioxo-L-gulonate + NADH + H(+). It catalyses the reaction 3-dehydro-L-gulonate + NADP(+) = 2,3-dioxo-L-gulonate + NADPH + H(+). Functionally, catalyzes the reduction of 2,3-diketo-L-gulonate in the presence of NADH, to form 3-keto-L-gulonate. The polypeptide is 2,3-diketo-L-gulonate reductase (Klebsiella pneumoniae (strain 342)).